A 66-amino-acid polypeptide reads, in one-letter code: Opicalcin-2 (66 aa).

Residues 1–22 (MKPSLIIVTFIVVFMTISCVAA) form the signal peptide. Positions 23–31 (DDEQETWIE) are excised as a propeptide. 3 cysteine pairs are disulfide-bonded: cysteine 36–cysteine 50, cysteine 43–cysteine 54, and cysteine 49–cysteine 65. An essential for stimulation of [3H]ryanodine binding to RYR1 region spans residues 55-57 (KRR).

Belongs to the scorpion calcin family. In terms of tissue distribution, expressed by the venom gland.

The protein localises to the secreted. Its function is as follows. This toxin stabilizes ryanodine receptor 1 (RyR1) opening in a long-lasting subconductance state (40% of the full conductance state). Furthermore, it triggers calcium release from sarcoplasmic vesicles (64.2 nM are enough to induce a sharp release, and 50% of the total calcium is released after toxin (100 nM) addition) probably by acting as a cell-penetrating peptide (CPP). In addition, it has been shown to dose-dependently stimulate ryanodine binding to RyR1 (EC(50)=3.2 nM). It also augments the bell-shaped calcium-[3H]ryanodine binding curve that is maximal at about 10 uM calcium concentration. It binds a different site as ryanodine. It acts synergistically with caffeine. In vivo, intracerebroventricular injection into mice induces neurotoxic symptoms, followed by death. This Opistophthalmus carinatus (African yellow leg scorpion) protein is Opicalcin-2.